The following is a 207-amino-acid chain: Small ribosomal subunit protein uS4A (207 aa).

The S4 RNA-binding domain maps to 98 to 158 (TRLDNVAYRL…EKSKSSAKFK (61 aa)).

Belongs to the universal ribosomal protein uS4 family. As to quaternary structure, part of the 30S ribosomal subunit. Contacts protein S5. The interaction surface between S4 and S5 is involved in control of translational fidelity.

In terms of biological role, one of the primary rRNA binding proteins, it binds directly to 16S rRNA where it nucleates assembly of the body of the 30S subunit. Its function is as follows. With S5 and S12 plays an important role in translational accuracy. The chain is Small ribosomal subunit protein uS4A from Alkaliphilus oremlandii (strain OhILAs) (Clostridium oremlandii (strain OhILAs)).